The following is a 345-amino-acid chain: Cuticle collagen 14 (345 aa).

Triple-helical region regions lie at residues 156–185 (GPPG…PGPP), 207–263 (GDGG…PGTY), and 268–333 (GPAG…PGSC). A disordered region spans residues 161 to 345 (AGDGGRDGAD…CPPARLAPGY (185 aa)). Composition is skewed to pro residues over residues 179-191 (IGPP…PGPD), 198-223 (PQCP…PPGA), and 278-290 (RPGP…PAGP). Residues 292–304 (GENGKGGGQGPSG) show a composition bias toward gly residues.

The protein belongs to the cuticular collagen family. As to quaternary structure, collagen polypeptide chains are complexed within the cuticle by disulfide bonds and other types of covalent cross-links.

Functionally, nematode cuticles are composed largely of collagen-like proteins. The cuticle functions both as an exoskeleton and as a barrier to protect the worm from its environment. In Caenorhabditis elegans, this protein is Cuticle collagen 14 (col-14).